Reading from the N-terminus, the 266-residue chain is Protein PAE0875 (266 aa).

The protein belongs to the CinA family.

The protein is Protein PAE0875 of Pyrobaculum aerophilum (strain ATCC 51768 / DSM 7523 / JCM 9630 / CIP 104966 / NBRC 100827 / IM2).